Here is a 320-residue protein sequence, read N- to C-terminus: Taste receptor type 2 member 129 (320 aa).

Over 1 to 8 (MDGIVQNM) the chain is Extracellular. The chain crosses the membrane as a helical span at residues 9 to 29 (FTFIVIVEIIIGWIGNGFIAL). The Cytoplasmic portion of the chain corresponds to 30 to 55 (VNCIHWYKRRKISALNQILTALAFSR). Residues 56–76 (IYLLLTVFTVIAVSTLYTHVL) traverse the membrane as a helical segment. Residues 77–88 (VTRRVVKLINFH) are Extracellular-facing. The chain crosses the membrane as a helical span at residues 89–109 (LLFSNHFSMWLAACLGLYYFL). At 110-128 (KIAHFPNSIFVYLKMRINQ) the chain is on the cytoplasmic side. Residues 129-149 (VVSGTLLMSLGLLFLNTLLIN) form a helical membrane-spanning segment. Topologically, residues 150 to 185 (SYIDTKIDDYREHLLYDFTSNNTASFYRVILVINNC) are extracellular. N170 is a glycosylation site (N-linked (GlcNAc...) asparagine). The chain crosses the membrane as a helical span at residues 186–206 (IFTSIPFTLSQSTFLLLIFSL). Topologically, residues 207-233 (WRHYKKMQQHAQRCRDVLADAHIRVLQ) are cytoplasmic. Residues 234 to 254 (TMVTYVLLCAIFFLSLSMQIL) traverse the membrane as a helical segment. The Extracellular portion of the chain corresponds to 255 to 264 (RSELLKNILY). The helical transmembrane segment at 265-285 (VRFCEIVAAVFPSGHSCVLIC) threads the bilayer. At 286-320 (RDTNLRGTFLSVLSWLKQRFTSWIPNINCRSSCIF) the chain is on the cytoplasmic side.

It belongs to the G-protein coupled receptor T2R family.

It localises to the membrane. Putative taste receptor which may play a role in the perception of bitterness. This chain is Taste receptor type 2 member 129, found in Mus musculus (Mouse).